Here is a 209-residue protein sequence, read N- to C-terminus: High-affinity nitrate transporter 3.2 (209 aa).

The first 22 residues, 1–22 (MAIHTLLFVSLLIFSLIESSSG), serve as a signal peptide directing secretion. A helical transmembrane segment spans residues 177 to 197 (LDIASTFFSVFSVVSLFVFFV).

This sequence belongs to the NAR2 family. Bearly detected in roots and shoots.

The protein localises to the cell membrane. Acts as a dual component transporter with NTR2.1. Required for high-affinity nitrate transport. The chain is High-affinity nitrate transporter 3.2 from Arabidopsis thaliana (Mouse-ear cress).